The sequence spans 513 residues: MALRAPALLPLLLLLLPLRAAGCPAACRCYSATVECGALRLRVVPLGIPPGTQTLFLQDNNIARLEPGALAPLAALRRLYLHNNSLRALEAGAFRAQPRLLELALTSNRLRGLRSGAFVGLAQLRVLYLAGNQLARLLDFTFLHLPRLQELHLQENSIELLEDQALAGLSSLALLDLSRNQLGTISREALQPLASLQVLRLTENPWRCDCALHWLGAWIKEGGQRLLTSRDRKIMCAEPPRLALQSLLDVSHSSLICIPPSVHVQPLELTANLGEDLRVACQASGYPQPLVTWRKVPQPREGRPRAQAQLEGGLLGLGGHSASDTGSGMLFLSNITLAHAGKYECEASNAGGAARVPFRLLVNASRQQPQQPAQPPPPAARPAGSEPRPEAGSMAFRALGVATQTAIAAAIALLALTALLLVAMICRRRRRRKKARGPPGEGALFVNDYLDGPCTFAQLEELRDERGHEMFVINRSKPLFAEGPAEAPADCGPEQGAGPGLRVPPPVAYEIHC.

An N-terminal signal peptide occupies residues 1–20 (MALRAPALLPLLLLLLPLRA). Residues 21 to 50 (AGCPAACRCYSATVECGALRLRVVPLGIPP) form the LRRNT domain. LRR repeat units follow at residues 51-72 (GTQT…ALAP), 75-96 (ALRR…AFRA), 99-120 (RLLE…AFVG), 123-144 (QLRV…TFLH), 147-168 (RLQE…ALAG), and 171-192 (SLAL…ALQP). In terms of domain architecture, LRRCT spans 204–259 (NPWRCDCALHWLGAWIKEGGQRLLTSRDRKIMCAEPPRLALQSLLDVSHSSLICIP). The Ig-like C2-type domain maps to 260 to 361 (PSVHVQPLEL…GAARVPFRLL (102 aa)). C281 and C345 are joined by a disulfide. 2 N-linked (GlcNAc...) asparagine glycosylation sites follow: N334 and N363. Residues 365–391 (SRQQPQQPAQPPPPAARPAGSEPRPEA) are disordered. Residues 406 to 426 (AIAAAIALLALTALLLVAMIC) form a helical membrane-spanning segment.

The protein localises to the membrane. The chain is Leucine-rich repeat-containing protein 24 (LRRC24) from Homo sapiens (Human).